Here is a 132-residue protein sequence, read N- to C-terminus: Acid shock protein (132 aa).

The first 21 residues, 1–21 (MKKVLALIVAATMGLSSVAFA), serve as a signal peptide directing secretion. The propeptide occupies 22–69 (AETTAAATAAPAATSTTAAPAVEKAAPAKATHHKKHKATKQTTEQKAQ). A compositionally biased stretch (low complexity) spans 30-50 (AAPAATSTTAAPAVEKAAPAK). The disordered stretch occupies residues 30–132 (AAPAATSTTA…AKKSATAPAA (103 aa)). Positions 51–60 (ATHHKKHKAT) are enriched in basic residues. Positions 61–99 (KQTTEQKAQAAKKAVKKAPAQKAQAAKKAVKKAPVQKAQ) are enriched in low complexity. Over residues 100–124 (AAKKHVKKAPAQKAQAAKKHHKTAK) the composition is skewed to basic residues.

This sequence belongs to the Asr family. In terms of processing, proteolytic processing gives rise to the active protein.

It is found in the periplasm. Its function is as follows. Required for growth and/or survival at acidic conditions. The chain is Acid shock protein from Yersinia enterocolitica serotype O:8 / biotype 1B (strain NCTC 13174 / 8081).